Consider the following 564-residue polypeptide: Diacylglycerol kinase epsilon (564 aa).

Residues 20 to 40 (LVLWTLCSVLLPVFITLWCSL) traverse the membrane as a helical segment. 2 consecutive Phorbol-ester/DAG-type zinc fingers follow at residues 57–106 (KHCW…RFPC) and 121–174 (PHHW…SEKC). In terms of domain architecture, DAGKc spans 212-353 (KQWTPLIILA…LDRWKVQVTN (142 aa)).

The protein belongs to the eukaryotic diacylglycerol kinase family. As to expression, highly expressed in brain and heart. In brain, highly expressed in Purkinje cells of the cerebellum, pyramidal cells of the hippocampus, mitral cells of the olfactory bulb, and neurons of the substantia nigra. Lower expression in neurons of the thalamus, superior olive, and lateral reticular nucleus is also detected. Expressed in platelets.

It is found in the membrane. It localises to the cytoplasm. The enzyme catalyses a 1,2-diacyl-sn-glycerol + ATP = a 1,2-diacyl-sn-glycero-3-phosphate + ADP + H(+). It carries out the reaction 1-hexadecanoyl-2-(5Z,8Z,11Z,14Z-eicosatetraenoyl)-sn-glycerol + ATP = 1-hexadecanoyl-2-(5Z,8Z,11Z,14Z-eicosatetraenoyl)-sn-glycero-3-phosphate + ADP + H(+). It catalyses the reaction 1-octadecanoyl-2-(5Z,8Z,11Z,14Z-eicosatetraenoyl)-sn-glycerol + ATP = 1-octadecanoyl-2-(5Z,8Z,11Z,14Z-eicosatetraenoyl)-sn-glycero-3-phosphate + ADP + H(+). The catalysed reaction is 1-eicosanoyl-2-(5Z,8Z,11Z,14Z)-eicosatetraenoyl-sn-glycerol + ATP = 1-eicosanoyl-2-(5Z,8Z,11Z,14Z)-eicosatetraenoyl-sn-glycero-3-phosphate + ADP + H(+). The enzyme catalyses 1,2-di-(5Z,8Z,11Z,14Z)-eicosatetraenoyl-sn-glycerol + ATP = 1,2-di-(5Z,8Z,11Z,14Z)-eicosatetraenoyl-sn-glycero-3-phosphate + ADP + H(+). It carries out the reaction 1-octadecanoyl-2-(9Z,12Z)-octadecadienoyl-sn-glycerol + ATP = 1-octadecanoyl-2-(9Z,12Z-octadecadienoyl)-sn-glycero-3-phosphate + ADP + H(+). It catalyses the reaction 1,2-di-(9Z,12Z-octadecadienoyl)-sn-glycerol + ATP = 1,2-di-(9Z,12Z-octadecadienoyl)-sn-glycero-3-phosphate + ADP + H(+). The catalysed reaction is 1,2-di-(9Z-octadecenoyl)-sn-glycerol + ATP = 1,2-di-(9Z-octadecenoyl)-sn-glycero-3-phosphate + ADP + H(+). It functions in the pathway lipid metabolism; glycerolipid metabolism. Membrane-bound diacylglycerol kinase that converts diacylglycerol/DAG into phosphatidic acid/phosphatidate/PA and regulates the respective levels of these two bioactive lipids. Thereby, acts as a central switch between the signaling pathways activated by these second messengers with different cellular targets and opposite effects in numerous biological processes. Also plays an important role in the biosynthesis of complex lipids. Displays specificity for diacylglycerol substrates with an arachidonoyl acyl chain at the sn-2 position, with the highest activity toward 1-octadecanoyl-2-(5Z,8Z,11Z,14Z-eicosatetraenoyl)-sn-glycerol the main diacylglycerol intermediate within the phosphatidylinositol turnover cycle. Can also phosphorylate diacylglycerol substrates with a linoleoyl acyl chain at the sn-2 position but much less efficiently. This Mus musculus (Mouse) protein is Diacylglycerol kinase epsilon (Dgke).